We begin with the raw amino-acid sequence, 139 residues long: Probable disulfide formation protein C 1 (139 aa).

The chain crosses the membrane as a helical span at residues 8-27; the sequence is EYALFTAWGASFIATLGSLY. Cys-37 and Cys-40 are oxidised to a cystine. Helical transmembrane passes span 42–61 and 68–85; these read YQRI…VVKK and YSLP…YHYV. Cysteines 99 and 104 form a disulfide. Residues 113 to 135 traverse the membrane as a helical segment; sequence GFVTIPFLALIGFITIAVCSFIV.

The protein belongs to the DsbB family. BdbC subfamily.

The protein resides in the cell membrane. In terms of biological role, required for disulfide bond formation in some proteins. This is Probable disulfide formation protein C 1 (bdbC1) from Bacillus anthracis.